The following is a 51-amino-acid chain: Sperm protamine P1 (51 aa).

This sequence belongs to the protamine P1 family. As to expression, testis.

The protein localises to the nucleus. The protein resides in the chromosome. Its function is as follows. Protamines substitute for histones in the chromatin of sperm during the haploid phase of spermatogenesis. They compact sperm DNA into a highly condensed, stable and inactive complex. This chain is Sperm protamine P1 (PRM1), found in Trachypithecus johnii (Nilgiri langur).